The following is a 54-amino-acid chain: ComX pheromone (54 aa).

The propeptide occupies 1–46; it reads MQEIVGYLVKNPEVLDEVMKGRASLLNIDKDQLKSIVDAFGGLQIY. W51 carries 3'-geranyl-2',N2-cyclotryptophan lipidation.

As to quaternary structure, interacts directly with the sensor histidine kinase ComP and stimulates its activity. Post-translationally, trp-51 is modified by isoprenylation, probably by geranylation, which is essential for activity. Modified by the tryptophan prenyltransferase ComQ before export to the extracellular environment. The type of isoprenyl derivative differs among the different pherotypes and depends on ComX primary sequence.

It is found in the secreted. Part of a major quorum-sensing system that regulates the development of genetic competence. Acts through the activation of the two-component regulatory system ComP/ComA composed of a sensor histidine kinase, ComP, and a response regulator, ComA. This chain is ComX pheromone, found in Bacillus mojavensis.